A 331-amino-acid polypeptide reads, in one-letter code: MIVLGIESTAHTFGVGVAQDQVPFILANERHTFVPQTGGMKPSEAARHHTLVAHEILRGALDRARISIRDVDGIAVALGPGMGPTLRVGAVVARALSLRFNKKLVPVNHGIGHIEIGYLTTEAKDPLILYLSGGNTIITTYYRRRFRIFGETLDIALGNMMDTFVREVGLAPPYIVDGKHKIDICAEQGSSIIDLPYTVKGEDMSFSGLLTAALRAVKKHNLHDVCLSLREIAYGMLLEATERALALTEKGEIMIVGGVAASGSLRSKLEKLSNDWGVGLKVVPTSFAGDNGAMIAYAGLLALKHGVHIDVKDSTIRPRWRIDEVDIPWRD.

Positions 109, 113, and 130 each coordinate Fe cation. Residues 130–134 (YLSGG), aspartate 162, aspartate 183, and serine 262 each bind substrate. A Fe cation-binding site is contributed by aspartate 290.

It belongs to the KAE1 / TsaD family. The cofactor is Fe(2+).

Its subcellular location is the cytoplasm. It carries out the reaction L-threonylcarbamoyladenylate + adenosine(37) in tRNA = N(6)-L-threonylcarbamoyladenosine(37) in tRNA + AMP + H(+). Its function is as follows. Required for the formation of a threonylcarbamoyl group on adenosine at position 37 (t(6)A37) in tRNAs that read codons beginning with adenine. Is probably involved in the transfer of the threonylcarbamoyl moiety of threonylcarbamoyl-AMP (TC-AMP) to the N6 group of A37. The protein is tRNA N6-adenosine threonylcarbamoyltransferase of Metallosphaera sedula (strain ATCC 51363 / DSM 5348 / JCM 9185 / NBRC 15509 / TH2).